A 113-amino-acid chain; its full sequence is Beta-defensin 112 (113 aa).

3 cysteine pairs are disulfide-bonded: cysteine 54–cysteine 82, cysteine 61–cysteine 75, and cysteine 65–cysteine 83.

The protein belongs to the beta-defensin family.

Its subcellular location is the secreted. Functionally, has antibacterial activity. The protein is Beta-defensin 112 (DEFB112) of Pan troglodytes (Chimpanzee).